We begin with the raw amino-acid sequence, 216 residues long: Flagellar transcriptional regulator FlhC (216 aa).

Zn(2+) is bound by residues C137, C140, C157, and C160.

The protein belongs to the FlhC family. In terms of assembly, heterohexamer composed of two FlhC and four FlhD subunits. Each FlhC binds a FlhD dimer, forming a heterotrimer, and a hexamer assembles by dimerization of two heterotrimers. Zn(2+) is required as a cofactor.

Its subcellular location is the cytoplasm. Functions in complex with FlhD as a master transcriptional regulator that regulates transcription of several flagellar and non-flagellar operons by binding to their promoter region. Activates expression of class 2 flagellar genes, including fliA, which is a flagellum-specific sigma factor that turns on the class 3 genes. Also regulates genes whose products function in a variety of physiological pathways. The sequence is that of Flagellar transcriptional regulator FlhC from Paraburkholderia atlantica.